A 458-amino-acid chain; its full sequence is MAAEDPATRRVQVAEHPRLLKLKEMFNSKFGSTPKFYVRAPGRVNIIGEHIDYCGYSVIPMAVEQDMLIAVEPVKTHTLQLANTDPLYPDFSTTANNICIDKTKPLWHNYFLCGFKGIQEHFGLSKLPGMNCLVDGNIPPSSGLSSSSALVCCAGLVTLTVLGLRLSKVELAEICAKSERYIGTEGGGMDQSISFLAEEGTAKLIEFSPLRATNVKLPSGAVFVIANSCMEMNKAATSHFNVRVMECRLAAKVLAKHKGLQWDNVLRLEEVQSKLGISLEEMLLVTEDALHPEPYSREEICRCLGISLERLRTQILTPNTQDELTFKLYQRAKHVYSEAARVLQFKQVCEDAPDNAVQLLGELMNQSHRSCRDMYECSCPELDQLVDICRKFGAKGSRLTGAGWGGCTVSLVPADMLSSFLASVHEAYYQGNTSRLAQEKHSLFATKPGGGALVFREV.

Residues Arg43, Glu49, His50, and Asp52 each contribute to the alpha-D-galactose site. 3 residues coordinate ATP: Gly143, Ser145, and Ser146. Alpha-D-galactose is bound at residue Asp190. Residue Asp190 is the Proton acceptor of the active site. Residues Asn233 and Lys234 each coordinate ATP.

This sequence belongs to the GHMP kinase family. GalK subfamily. In terms of assembly, monomer.

It catalyses the reaction N-acetyl-alpha-D-galactosamine + ATP = N-acetyl-alpha-D-galactosamine 1-phosphate + ADP + H(+). In terms of biological role, acts on GalNAc. Also acts as a galactokinase when galactose is present at high concentrations. In Mus musculus (Mouse), this protein is N-acetylgalactosamine kinase (Galk2).